The following is a 623-amino-acid chain: (-)-limonene synthase TPS1, chloroplastic (623 aa).

Residues 1–60 constitute a chloroplast transit peptide; it reads MQCIAFHQFASSSSLPIWSSIDNRFTPKTSITSISKPKPKLKSKSNLKSRSRSSTCYPIQ. The interval 29–52 is disordered; the sequence is TSITSISKPKPKLKSKSNLKSRSR. Basic residues predominate over residues 37 to 51; that stretch reads PKPKLKSKSNLKSRS. Residues R337, D374, D378, R516, and D519 each coordinate (2E)-geranyl diphosphate. The Mg(2+) site is built by D374 and D378. A DDXXD motif motif is present at residues 374-378; that stretch reads DDMHD. Mg(2+)-binding residues include D519, T523, and E527.

Belongs to the terpene synthase family. Tpsb subfamily. Mg(2+) is required as a cofactor. Requires Mn(2+) as cofactor. K(+) serves as cofactor. In terms of tissue distribution, trichome.

Its subcellular location is the plastid. The protein resides in the chloroplast. It carries out the reaction (2E)-geranyl diphosphate = (4S)-limonene + diphosphate. It catalyses the reaction (2E)-geranyl diphosphate = terpinolene + diphosphate. The catalysed reaction is (2E)-geranyl diphosphate = (1R,5R)-alpha-pinene + diphosphate. The enzyme catalyses (2E)-geranyl diphosphate = (1R,5R)-beta-pinene + diphosphate. It carries out the reaction (2E)-geranyl diphosphate = beta-myrcene + diphosphate. It catalyses the reaction (2E)-geranyl diphosphate = (4R)-limonene + diphosphate. Its pathway is secondary metabolite biosynthesis; terpenoid biosynthesis. It participates in terpene metabolism; (4S)-limonene biosynthesis; (4S)-limonene from geranyl diphosphate: step 1/1. In terms of biological role, involved in monoterpene (C10) olefins biosynthesis, constituants of cannabinoids and terpenoids-rich resins. Catalyzes mainly the conversion of (2E)-geranyl diphosphate to (-)-limonene, and also produces minor products such as (+)-limonene, (+)-alpha-pinene, terpinolene, (+)-beta-pinene and beta-myrcene. The sequence is that of (-)-limonene synthase TPS1, chloroplastic from Cannabis sativa (Hemp).